Here is a 309-residue protein sequence, read N- to C-terminus: MTHTTVLLNEAVDALFCNPDATADASATGAQVYVDATFGRGGHSRLILSRMTPTDRLIAFDKDAEALVEAGNIHDSRFSIRHQGFSHLDELPPASVAGVLLDLGISSPQIDNPARGFSFRFEGPLDMRMDTTRGISVAQWLANAETEKIAEVIRDYGEERFAGPIAKAIVARRQERGPISSTTELAQLVADTVKTREPGQNPATRTFQAFRIFINAELEELQQALAASLLVLAPGGRLVVISFHSLEDRIVKQFIAQHSRDVYDRRAPFAPPKVMQLKALARLRPSAAEVSANPRARSAIMRVAQRTAS.

S-adenosyl-L-methionine is bound by residues 41–43 (GGH), Asp61, Phe85, Asp102, and Gln109.

The protein belongs to the methyltransferase superfamily. RsmH family.

Its subcellular location is the cytoplasm. The enzyme catalyses cytidine(1402) in 16S rRNA + S-adenosyl-L-methionine = N(4)-methylcytidine(1402) in 16S rRNA + S-adenosyl-L-homocysteine + H(+). Specifically methylates the N4 position of cytidine in position 1402 (C1402) of 16S rRNA. The sequence is that of Ribosomal RNA small subunit methyltransferase H from Albidiferax ferrireducens (strain ATCC BAA-621 / DSM 15236 / T118) (Rhodoferax ferrireducens).